The sequence spans 222 residues: Large ribosomal subunit protein uL1 (222 aa).

The protein belongs to the universal ribosomal protein uL1 family. Part of the 50S ribosomal subunit.

Functionally, binds directly to 23S rRNA. Probably involved in E site tRNA release. In terms of biological role, protein L1 is also a translational repressor protein, it controls the translation of its operon by binding to its mRNA. This is Large ribosomal subunit protein uL1 from Pyrobaculum calidifontis (strain DSM 21063 / JCM 11548 / VA1).